We begin with the raw amino-acid sequence, 389 residues long: Acyl-[acyl-carrier-protein] dehydrogenase MbtN (389 aa).

It belongs to the acyl-CoA dehydrogenase family. FAD is required as a cofactor.

It functions in the pathway siderophore biosynthesis; mycobactin biosynthesis. Functionally, catalyzes the dehydrogenation at the alpha-beta position of ACP-bound acyl chains. This results in the introduction of a double bond in the lipidic chain, which is further transferred to the epsilon-amino group of lysine residue in the mycobactin core by MbtK. This is Acyl-[acyl-carrier-protein] dehydrogenase MbtN (mbtN) from Mycobacterium sp. (strain MCS).